Here is a 291-residue protein sequence, read N- to C-terminus: Glycine--tRNA ligase alpha subunit (291 aa).

This sequence belongs to the class-II aminoacyl-tRNA synthetase family. Tetramer of two alpha and two beta subunits.

It is found in the cytoplasm. It catalyses the reaction tRNA(Gly) + glycine + ATP = glycyl-tRNA(Gly) + AMP + diphosphate. The polypeptide is Glycine--tRNA ligase alpha subunit (Trichlorobacter lovleyi (strain ATCC BAA-1151 / DSM 17278 / SZ) (Geobacter lovleyi)).